Consider the following 642-residue polypeptide: Myrosinase-binding protein 2 (642 aa).

Jacalin-type lectin domains are found at residues 2 to 151 (SEKV…HFFA), 156 to 291 (LKHF…HFAP), 334 to 477 (PNKV…YFAP), and 490 to 633 (SKKL…HAVP). The span at 296 to 334 (TPAPAPAPAPAPAPAPSPAPASAPVPAPAPTPAPAPAPP) shows a compositional bias: pro residues. Disordered regions lie at residues 296-338 (TPAP…NKVE) and 479-499 (TNST…RGGN). Low complexity predominate over residues 479 to 490 (TNSTTPSTPSTS).

The protein belongs to the jacalin lectin family. In terms of tissue distribution, expressed in flowers. Detected mainly in ovules and styles of immature flowers, but also in pistils, styles, stamens, petals and embryos. Not detected in leaves.

The polypeptide is Myrosinase-binding protein 2 (F-ATMBP) (Arabidopsis thaliana (Mouse-ear cress)).